An 89-amino-acid chain; its full sequence is uncharacterized protein (89 aa).

The next 3 helical transmembrane spans lie at 5–25 (AYLV…KRKA), 36–56 (RLWL…MQTF), and 67–87 (YGVP…YSPF).

Its subcellular location is the cell membrane. This is an uncharacterized protein from Bacillus subtilis (strain 168).